The sequence spans 247 residues: Cell division protein ZapD (247 aa).

This sequence belongs to the ZapD family. As to quaternary structure, interacts with FtsZ.

It is found in the cytoplasm. Functionally, cell division factor that enhances FtsZ-ring assembly. Directly interacts with FtsZ and promotes bundling of FtsZ protofilaments, with a reduction in FtsZ GTPase activity. The protein is Cell division protein ZapD of Salmonella arizonae (strain ATCC BAA-731 / CDC346-86 / RSK2980).